Here is a 216-residue protein sequence, read N- to C-terminus: 3-keto-L-gulonate-6-phosphate decarboxylase UlaD (216 aa).

A substrate-binding site is contributed by Asp-11. 2 residues coordinate Mg(2+): Glu-33 and Asp-62. Position 192 (Arg-192) interacts with substrate.

This sequence belongs to the HPS/KGPDC family. KGPDC subfamily. As to quaternary structure, homodimer. The cofactor is Mg(2+).

It catalyses the reaction 3-dehydro-L-gulonate 6-phosphate + H(+) = L-xylulose 5-phosphate + CO2. It functions in the pathway cofactor degradation; L-ascorbate degradation; D-xylulose 5-phosphate from L-ascorbate: step 2/4. Catalyzes the decarboxylation of 3-keto-L-gulonate-6-P into L-xylulose-5-P. Is involved in the anaerobic L-ascorbate utilization. This Shigella boydii serotype 18 (strain CDC 3083-94 / BS512) protein is 3-keto-L-gulonate-6-phosphate decarboxylase UlaD.